We begin with the raw amino-acid sequence, 400 residues long: MGILVIFMKFFNREKEIHKILSIIEGEPNLIYFIYGSINSGKTALINEIINNRLDKNKYIVFYFDLREIFISKYDDFIEVLFEEYEGDKSPIEVIKAIINDLPSLYGIPIPKNTLNEIFKKKTTKNVFRYITNVLMDIKREGKQPIIIIDELQKIGDMKINGFLIYELFNYFVSLTKHKHLCHVFCLSSDSLFIERVYNEAMLEDRVDYILVDDHRGGYAPSIGILPQIESGVAFGNPALEYSNRGFASMRGEYILVDDFDKETALKFMDFLAKENNMSLTNEDKELIYNYVGGKPVLIIKVIDKLRYENLNDILDFMLKDATQKLKYFLEDVKEEDEELYKKVVDALKLFKEDYEIEDIKIPKKIREFLIKRNILFLNPIEGILKPQSFLVWNAIKKVL.

ATP is bound at residue 36–43 (GSINSGKT).

Belongs to the archaeal ATPase family.

This is an uncharacterized protein from Methanocaldococcus jannaschii (strain ATCC 43067 / DSM 2661 / JAL-1 / JCM 10045 / NBRC 100440) (Methanococcus jannaschii).